We begin with the raw amino-acid sequence, 153 residues long: Protein eva-1 homolog A (153 aa).

A helical membrane pass occupies residues 37–57 (ALYFVCGVCLGLVLTLIALVV). The interval 66 to 97 (KTQQAPKKTGKTVENTSDTSDSDSDWDNTSDL) is disordered.

The protein belongs to the EVA1 family.

The protein localises to the endoplasmic reticulum membrane. Its subcellular location is the lysosome membrane. Functionally, acts as a regulator of programmed cell death, mediating both autophagy and apoptosis. This chain is Protein eva-1 homolog A (Eva1a), found in Danio rerio (Zebrafish).